The chain runs to 104 residues: L-rhamnose mutarotase (104 aa).

Tyr18 serves as a coordination point for substrate. Catalysis depends on His22, which acts as the Proton donor. Substrate is bound by residues Tyr41 and 76 to 77 (WW).

It belongs to the rhamnose mutarotase family. Homodimer.

It localises to the cytoplasm. The enzyme catalyses alpha-L-rhamnose = beta-L-rhamnose. It functions in the pathway carbohydrate metabolism; L-rhamnose metabolism. Functionally, involved in the anomeric conversion of L-rhamnose. The protein is L-rhamnose mutarotase of Burkholderia ambifaria (strain MC40-6).